The following is a 311-amino-acid chain: Malate dehydrogenase (311 aa).

Residues 7–13 (GAAGGIG) and Asp-34 each bind NAD(+). Residues Arg-81 and Arg-87 each coordinate substrate. Residues Asn-94 and 117–119 (ITN) contribute to the NAD(+) site. The substrate site is built by Asn-119 and Arg-153. His-177 acts as the Proton acceptor in catalysis. NAD(+) is bound at residue Met-227.

It belongs to the LDH/MDH superfamily. MDH type 1 family. In terms of assembly, homodimer.

The enzyme catalyses (S)-malate + NAD(+) = oxaloacetate + NADH + H(+). Its function is as follows. Catalyzes the reversible oxidation of malate to oxaloacetate. This Vibrio atlanticus (strain LGP32) (Vibrio splendidus (strain Mel32)) protein is Malate dehydrogenase.